The chain runs to 213 residues: Putative manganese efflux pump MntP (213 aa).

The next 6 membrane-spanning stretches (helical) occupy residues isoleucine 3 to alanine 23, alanine 36 to glycine 56, alanine 67 to glutamate 87, leucine 130 to isoleucine 150, isoleucine 152 to isoleucine 172, and isoleucine 187 to isoleucine 207.

This sequence belongs to the MntP (TC 9.B.29) family.

It localises to the cell membrane. Probably functions as a manganese efflux pump. This is Putative manganese efflux pump MntP from Clostridium perfringens (strain SM101 / Type A).